A 531-amino-acid polypeptide reads, in one-letter code: UDP-glucuronosyltransferase 1A7 (531 aa).

Positions 1-25 are cleaved as a signal peptide; it reads MAPADVPASLPLGLCLLLASGFGHA. N-linked (GlcNAc...) asparagine glycosylation is found at asparagine 71, asparagine 293, and asparagine 431. The chain crosses the membrane as a helical span at residues 487–503; sequence LDVIGFLLAIVLTVVFI.

Belongs to the UDP-glycosyltransferase family. In terms of assembly, homodimer. Homooligomer. Interacts with UGT1A1, UGT1A3, UGT1A4, UGT1A6, UGT1A8, UGT1A9 and UGT1A10 to form heterodimers.

It is found in the endoplasmic reticulum membrane. It catalyses the reaction glucuronate acceptor + UDP-alpha-D-glucuronate = acceptor beta-D-glucuronoside + UDP + H(+). The catalysed reaction is 17alpha-estradiol + UDP-alpha-D-glucuronate = 17alpha-estradiol 3-O-(beta-D-glucuronate) + UDP + H(+). It carries out the reaction prunetin + UDP-alpha-D-glucuronate = prunetin-5-O-beta-D-glucuronide + UDP. The enzyme catalyses 5-epi-5-F2t-IsoP + UDP-alpha-D-glucuronate = 5-epi-5-F2t-IsoP-glucuronide + UDP + H(+). It catalyses the reaction (E)-ferulate + UDP-alpha-D-glucuronate = (E)-ferulic acid beta-D-glucuronate ester + UDP. The catalysed reaction is candesartan + UDP-alpha-D-glucuronate = candesartan O-beta-D-glucuronoside + UDP. It carries out the reaction SN-38 + UDP-alpha-D-glucuronate = SN-38 O-beta-D-glucuronide + UDP + H(+). The enzyme catalyses mycophenolate + UDP-alpha-D-glucuronate = mycophenolate 7-O-beta-D-glucuronide + UDP + H(+). Its function is as follows. UDP-glucuronosyltransferase (UGT) that catalyzes phase II biotransformation reactions in which lipophilic substrates are conjugated with glucuronic acid to increase the metabolite's water solubility, thereby facilitating excretion into either the urine or bile. Essential for the elimination and detoxification of drugs, xenobiotics and endogenous compounds. Catalyzes the glucuronidation of endogenous estrogen hormone epiestradiol. Involved in the glucuronidation of F2-isoprostane (5-epi-5-F2t-IsoP). Involved in the glucuronidation of the phytochemical ferulic acid at the carboxylic acid group. Also catalyzes the glucuronidation of the isoflavones genistein, daidzein, glycitein, formononetin, biochanin A and prunetin, which are phytoestrogens with anticancer and cardiovascular properties. Involved in the glucuronidation of the AGTR1 angiotensin receptor antagonist caderastan, a drug which can inhibit the effect of angiotensin II. Involved in the biotransformation of 7-ethyl-10-hydroxycamptothecin (SN-38), the pharmacologically active metabolite of the anticancer drug irinotecan. Also metabolizes mycophenolate, an immunosuppressive agent. This chain is UDP-glucuronosyltransferase 1A7, found in Rattus norvegicus (Rat).